The sequence spans 248 residues: Pulmonary surfactant-associated protein A (248 aa).

The first 20 residues, 1–20 (MLLCSLTLTLILLAVSGTKC), serve as a signal peptide directing secretion. The region spanning 31-100 (GVPGIPGSPG…PGERGPPGPP (70 aa)) is the Collagen-like domain. Residues 34-105 (GIPGSPGLPG…PPGPPAYPDE (72 aa)) form a disordered region. Residues 54–65 (PGPPGPIGPPGG) are compositionally biased toward pro residues. Positions 84 to 93 (ERGDKGEPGE) are enriched in basic and acidic residues. The region spanning 134–247 (VGEKVFSTNG…CLQYRLAICE (114 aa)) is the C-type lectin domain. 2 disulfide bridges follow: cysteine 155-cysteine 246 and cysteine 224-cysteine 238. An N-linked (GlcNAc...) asparagine glycan is attached at asparagine 207. Positions 215, 217, 234, and 235 each coordinate Ca(2+).

It belongs to the SFTPA family. In terms of assembly, oligomeric complex of 6 set of homotrimers.

Its subcellular location is the secreted. It localises to the extracellular space. The protein resides in the extracellular matrix. The protein localises to the surface film. Its function is as follows. In presence of calcium ions, it binds to surfactant phospholipids and contributes to lower the surface tension at the air-liquid interface in the alveoli of the mammalian lung and is essential for normal respiration. Enhances the expression of MYO18A/SP-R210 on alveolar macrophages. The chain is Pulmonary surfactant-associated protein A (SFTPA1) from Equus caballus (Horse).